A 439-amino-acid chain; its full sequence is Xylose isomerase (439 aa).

Active-site residues include H103 and D106. Mg(2+) is bound by residues E234, E270, H273, D298, D309, D311, and D341.

This sequence belongs to the xylose isomerase family. Homotetramer. Mg(2+) is required as a cofactor.

The protein localises to the cytoplasm. It catalyses the reaction alpha-D-xylose = alpha-D-xylulofuranose. In Bacteroides fragilis (strain ATCC 25285 / DSM 2151 / CCUG 4856 / JCM 11019 / LMG 10263 / NCTC 9343 / Onslow / VPI 2553 / EN-2), this protein is Xylose isomerase.